Reading from the N-terminus, the 95-residue chain is Small ribosomal subunit protein uS19 (95 aa).

The disordered stretch occupies residues 73 to 95; sequence EFSPTRTYRGHGADKNAKGSKKK.

Belongs to the universal ribosomal protein uS19 family.

Its function is as follows. Protein S19 forms a complex with S13 that binds strongly to the 16S ribosomal RNA. This Deinococcus radiodurans (strain ATCC 13939 / DSM 20539 / JCM 16871 / CCUG 27074 / LMG 4051 / NBRC 15346 / NCIMB 9279 / VKM B-1422 / R1) protein is Small ribosomal subunit protein uS19.